Reading from the N-terminus, the 353-residue chain is MTIALGKFTEDEKDLFDIMDDWLRRDRFVFVGWSGLLLFPCAYFALGGWFTGTTFVTSWYTHGLASSYLEGCNFLTAAVSTPANSLAHSLLLLWGPEAQGDFTRWCQLGGLWTFVALHGAFGLIGFMLRQFELARSVQLRPYNAIAFSGPIAVFVSVFLIYPLGQSGWFFAPSFGVAAIFRFILFFQGFHNWTLNPFHMMGVAGVLGAALLCAIHGATVENLYFEDGDGANTFRAFNPTQAEETYSMVTANRFWSQIFGVAFSNKRWLHFFMLFVPVTGLWMSALGVVGLALNLRAYDFVSQEIRAAEDPEFETFYTKNILLNEGIRAWMAAQDQPHENLIFPEEVLPRGNAL.

The residue at position 2 (Thr-2) is an N-acetylthreonine. Thr-2 is subject to Phosphothreonine. A helical membrane pass occupies residues 41 to 61; sequence CAYFALGGWFTGTTFVTSWYT. His-118 serves as a coordination point for chlorophyll a. The helical transmembrane segment at 125–141 threads the bilayer; sequence GFMLRQFELARSVQLRP. Residues Gln-130 and Asn-143 each contribute to the pheophytin a site. The chain crosses the membrane as a helical span at residues 153 to 166; that stretch reads VFVSVFLIYPLGQS. Residue His-198 participates in chlorophyll a binding. The chain crosses the membrane as a helical span at residues 208 to 228; sequence AALLCAIHGATVENLYFEDGD. The a plastoquinone site is built by His-215 and Phe-262. Residue His-215 participates in Fe cation binding. A Fe cation-binding site is contributed by His-269. A helical membrane pass occupies residues 279 to 295; that stretch reads GLWMSALGVVGLALNLR.

This sequence belongs to the reaction center PufL/M/PsbA/D family. In terms of assembly, PSII is composed of 1 copy each of membrane proteins PsbA, PsbB, PsbC, PsbD, PsbE, PsbF, PsbH, PsbI, PsbJ, PsbK, PsbL, PsbM, PsbT, PsbX, PsbY, PsbZ, Psb30/Ycf12, at least 3 peripheral proteins of the oxygen-evolving complex and a large number of cofactors. It forms dimeric complexes. The D1/D2 heterodimer binds P680, chlorophylls that are the primary electron donor of PSII, and subsequent electron acceptors. It shares a non-heme iron and each subunit binds pheophytin, quinone, additional chlorophylls, carotenoids and lipids. There is also a Cl(-1) ion associated with D1 and D2, which is required for oxygen evolution. The PSII complex binds additional chlorophylls, carotenoids and specific lipids. is required as a cofactor.

The protein localises to the plastid. The protein resides in the chloroplast thylakoid membrane. It carries out the reaction 2 a plastoquinone + 4 hnu + 2 H2O = 2 a plastoquinol + O2. In terms of biological role, photosystem II (PSII) is a light-driven water:plastoquinone oxidoreductase that uses light energy to abstract electrons from H(2)O, generating O(2) and a proton gradient subsequently used for ATP formation. It consists of a core antenna complex that captures photons, and an electron transfer chain that converts photonic excitation into a charge separation. The D1/D2 (PsbA/PsbD) reaction center heterodimer binds P680, the primary electron donor of PSII as well as several subsequent electron acceptors. D2 is needed for assembly of a stable PSII complex. This chain is Photosystem II D2 protein, found in Panax ginseng (Korean ginseng).